Consider the following 262-residue polypeptide: Aquaporin TIP3-1 (262 aa).

Helical transmembrane passes span 27–47 and 61–81; these read AAIS…GSVL and GLVA…AVAV. An NPA 1 motif is present at residues 89-91; sequence NPA. Helical transmembrane passes span 104–124, 148–168, and 175–195; these read LVRA…ATLL, AVLL…ATVI, and VGTI…LAGG. The NPA 2 motif lies at 203 to 205; that stretch reads NPA. The chain crosses the membrane as a helical span at residues 223 to 243; sequence YWLGPFLGAGLAGLVYEYLVI.

It belongs to the MIP/aquaporin (TC 1.A.8) family. TIP (TC 1.A.8.10) subfamily.

It is found in the vacuole membrane. Its function is as follows. Aquaporins facilitate the transport of water and small neutral solutes across cell membranes. The chain is Aquaporin TIP3-1 (TIP3-1) from Zea mays (Maize).